The chain runs to 474 residues: Methylenetetrahydrofolate--tRNA-(uracil-5-)-methyltransferase TrmFO (474 aa).

Position 14–19 (14–19 (GGGLAG)) interacts with FAD.

This sequence belongs to the MnmG family. TrmFO subfamily. Requires FAD as cofactor.

The protein resides in the cytoplasm. It catalyses the reaction uridine(54) in tRNA + (6R)-5,10-methylene-5,6,7,8-tetrahydrofolate + NADH + H(+) = 5-methyluridine(54) in tRNA + (6S)-5,6,7,8-tetrahydrofolate + NAD(+). The catalysed reaction is uridine(54) in tRNA + (6R)-5,10-methylene-5,6,7,8-tetrahydrofolate + NADPH + H(+) = 5-methyluridine(54) in tRNA + (6S)-5,6,7,8-tetrahydrofolate + NADP(+). Functionally, catalyzes the folate-dependent formation of 5-methyl-uridine at position 54 (M-5-U54) in all tRNAs. This Caulobacter vibrioides (strain ATCC 19089 / CIP 103742 / CB 15) (Caulobacter crescentus) protein is Methylenetetrahydrofolate--tRNA-(uracil-5-)-methyltransferase TrmFO.